The following is a 183-amino-acid chain: MIVGLIGVVEKISALETHIEVQGVVYGVQVSMRTAALLQAGQKARLKILQVIKEDAHLLYGFLEEGEKILFERLLKINGVGGRIALAILSSFSPNEFENIIATKEVKRLQQVPGIGKKLADKIMVDLIGFFIQDETKPMHNEVFLALESLGFKSAEINKVLKTLKPSLSIEAAIKEALQQLRS.

Residues 1-63 (MIVGLIGVVE…EDAHLLYGFL (63 aa)) are domain I. The domain II stretch occupies residues 64–141 (EEGEKILFER…IQDETKPMHN (78 aa)). A region of interest (flexible linker) is located at residue N141. A domain III region spans residues 141 to 183 (NEVFLALESLGFKSAEINKVLKTLKPSLSIEAAIKEALQQLRS).

This sequence belongs to the RuvA family. In terms of assembly, homotetramer. Forms an RuvA(8)-RuvB(12)-Holliday junction (HJ) complex. HJ DNA is sandwiched between 2 RuvA tetramers; dsDNA enters through RuvA and exits via RuvB. An RuvB hexamer assembles on each DNA strand where it exits the tetramer. Each RuvB hexamer is contacted by two RuvA subunits (via domain III) on 2 adjacent RuvB subunits; this complex drives branch migration. In the full resolvosome a probable DNA-RuvA(4)-RuvB(12)-RuvC(2) complex forms which resolves the HJ.

The protein localises to the cytoplasm. The RuvA-RuvB-RuvC complex processes Holliday junction (HJ) DNA during genetic recombination and DNA repair, while the RuvA-RuvB complex plays an important role in the rescue of blocked DNA replication forks via replication fork reversal (RFR). RuvA specifically binds to HJ cruciform DNA, conferring on it an open structure. The RuvB hexamer acts as an ATP-dependent pump, pulling dsDNA into and through the RuvAB complex. HJ branch migration allows RuvC to scan DNA until it finds its consensus sequence, where it cleaves and resolves the cruciform DNA. The protein is Holliday junction branch migration complex subunit RuvA of Helicobacter pylori (strain G27).